We begin with the raw amino-acid sequence, 211 residues long: MEKHKNISMAVIKRLPKYHRYLEELMKNEVDRISSKELGEKIGFTASQIRQDLNCFGDFGQQGYGYNVKELYTQISAILGLDRGYEAALVGAGNIGQAVSNYSRFENLGFKITAIFDANPKLIGMKIRDVEIMDIDEMESVLEEHKIDIGIICVPRKNAQVVADELIRGGVRAIWNFAPVDLVVPDHVKVENVHLSESLLTLIYLLNESES.

Residues 17-56 constitute a DNA-binding region (H-T-H motif); the sequence is KYHRYLEELMKNEVDRISSKELGEKIGFTASQIRQDLNCF. 91 to 96 contributes to the NAD(+) binding site; sequence GAGNIG.

Belongs to the transcriptional regulatory Rex family. Homodimer.

The protein localises to the cytoplasm. Modulates transcription in response to changes in cellular NADH/NAD(+) redox state. This chain is Redox-sensing transcriptional repressor Rex, found in Clostridium beijerinckii (strain ATCC 51743 / NCIMB 8052) (Clostridium acetobutylicum).